Reading from the N-terminus, the 99-residue chain is Putative pterin-4-alpha-carbinolamine dehydratase (99 aa).

It belongs to the pterin-4-alpha-carbinolamine dehydratase family.

It carries out the reaction (4aS,6R)-4a-hydroxy-L-erythro-5,6,7,8-tetrahydrobiopterin = (6R)-L-erythro-6,7-dihydrobiopterin + H2O. This chain is Putative pterin-4-alpha-carbinolamine dehydratase, found in Saccharolobus islandicus (strain M.16.27) (Sulfolobus islandicus).